Reading from the N-terminus, the 142-residue chain is Large ribosomal subunit protein uL11 (142 aa).

The protein belongs to the universal ribosomal protein uL11 family. As to quaternary structure, part of the ribosomal stalk of the 50S ribosomal subunit. Interacts with L10 and the large rRNA to form the base of the stalk. L10 forms an elongated spine to which L12 dimers bind in a sequential fashion forming a multimeric L10(L12)X complex. In terms of processing, one or more lysine residues are methylated.

Functionally, forms part of the ribosomal stalk which helps the ribosome interact with GTP-bound translation factors. This Stenotrophomonas maltophilia (strain R551-3) protein is Large ribosomal subunit protein uL11.